The sequence spans 308 residues: Cytochrome b (308 aa).

Helical transmembrane passes span 1–21, 45–66, 81–101, and 146–166; these read FGSL…LLAT, WLIR…YLHI, WNTG…GYVL, and FFAL…IHFT. Heme b is bound at residue His65. Heme b-binding residues include His150 and His164. Residue His169 participates in a ubiquinone binding. Transmembrane regions (helical) follow at residues 194 to 214, 256 to 276, and 288 to 308; these read VKDI…ALFS, LGGV…PFLH, and LSQF…WVGS.

The protein belongs to the cytochrome b family. As to quaternary structure, the cytochrome bc1 complex contains 11 subunits: 3 respiratory subunits (MT-CYB, CYC1 and UQCRFS1), 2 core proteins (UQCRC1 and UQCRC2) and 6 low-molecular weight proteins (UQCRH/QCR6, UQCRB/QCR7, UQCRQ/QCR8, UQCR10/QCR9, UQCR11/QCR10 and a cleavage product of UQCRFS1). This cytochrome bc1 complex then forms a dimer. Heme b serves as cofactor.

The protein resides in the mitochondrion inner membrane. In terms of biological role, component of the ubiquinol-cytochrome c reductase complex (complex III or cytochrome b-c1 complex) that is part of the mitochondrial respiratory chain. The b-c1 complex mediates electron transfer from ubiquinol to cytochrome c. Contributes to the generation of a proton gradient across the mitochondrial membrane that is then used for ATP synthesis. In Colaptes rupicola (Southern Andean flicker), this protein is Cytochrome b (MT-CYB).